The following is a 604-amino-acid chain: Sulfite reductase [NADPH] flavoprotein alpha-component (604 aa).

In terms of domain architecture, Flavodoxin-like spans 65-203; the sequence is VTILYGSQTG…AAGQWHADVL (139 aa). Residues 71-76, 118-121, and 154-163 each bind FMN; these read SQTGNG, STHG, and LGDSSYEFFC. In terms of domain architecture, FAD-binding FR-type spans 236–453; sequence QNPYSAEVLV…VEPNKHFRLP (218 aa). Residues Thr324, Leu358, 392-395, 410-412, and 425-428 each bind FAD; these read RLYS, TVA, and GGAS. NADP(+) contacts are provided by residues 524 to 525, 530 to 534, and Asp566; these read SR and KIYVQ. Tyr604 contributes to the FAD binding site.

It belongs to the NADPH-dependent sulphite reductase flavoprotein subunit CysJ family. The protein in the N-terminal section; belongs to the flavodoxin family. In the C-terminal section; belongs to the flavoprotein pyridine nucleotide cytochrome reductase family. As to quaternary structure, alpha(8)-beta(8). The alpha component is a flavoprotein, the beta component is a hemoprotein. FAD is required as a cofactor. Requires FMN as cofactor.

The enzyme catalyses hydrogen sulfide + 3 NADP(+) + 3 H2O = sulfite + 3 NADPH + 4 H(+). It participates in sulfur metabolism; hydrogen sulfide biosynthesis; hydrogen sulfide from sulfite (NADPH route): step 1/1. Functionally, component of the sulfite reductase complex that catalyzes the 6-electron reduction of sulfite to sulfide. This is one of several activities required for the biosynthesis of L-cysteine from sulfate. The flavoprotein component catalyzes the electron flow from NADPH -&gt; FAD -&gt; FMN to the hemoprotein component. The sequence is that of Sulfite reductase [NADPH] flavoprotein alpha-component from Shewanella sp. (strain MR-4).